We begin with the raw amino-acid sequence, 462 residues long: tRNA-2-methylthio-N(6)-dimethylallyladenosine synthase (462 aa).

Positions 1-116 (MKLFIQTLGC…ITQVLERPKA (116 aa)) constitute an MTTase N-terminal domain. [4Fe-4S] cluster is bound by residues Cys10, Cys47, Cys79, Cys148, Cys152, and Cys155. A Radical SAM core domain is found at 134–370 (QGMGIKAHLN…NLHKEILSKK (237 aa)). The 65-residue stretch at 372–436 (QLEIGRIHNV…GGGLMGRFIN (65 aa)) folds into the TRAM domain.

The protein belongs to the methylthiotransferase family. MiaB subfamily. In terms of assembly, monomer. Requires [4Fe-4S] cluster as cofactor.

Its subcellular location is the cytoplasm. It catalyses the reaction N(6)-dimethylallyladenosine(37) in tRNA + (sulfur carrier)-SH + AH2 + 2 S-adenosyl-L-methionine = 2-methylsulfanyl-N(6)-dimethylallyladenosine(37) in tRNA + (sulfur carrier)-H + 5'-deoxyadenosine + L-methionine + A + S-adenosyl-L-homocysteine + 2 H(+). Catalyzes the methylthiolation of N6-(dimethylallyl)adenosine (i(6)A), leading to the formation of 2-methylthio-N6-(dimethylallyl)adenosine (ms(2)i(6)A) at position 37 in tRNAs that read codons beginning with uridine. The polypeptide is tRNA-2-methylthio-N(6)-dimethylallyladenosine synthase (Helicobacter hepaticus (strain ATCC 51449 / 3B1)).